The following is a 304-amino-acid chain: Secreted mono- and diacylglycerol lipase MDL2 (304 aa).

An N-terminal signal peptide occupies residues 1–19 (MILGRTISLFLGCSALVSG). Cys-55 and Cys-297 are joined by a disulfide. Asn-102 and Asn-161 each carry an N-linked (GlcNAc...) asparagine glycan. Ser-171 serves as the catalytic Nucleophile. The active site involves Asp-228. Asn-253 carries N-linked (GlcNAc...) asparagine glycosylation. The active site involves His-281.

The protein belongs to the AB hydrolase superfamily. Lipase family. Class 3 subfamily.

Its subcellular location is the secreted. It is found in the cell wall. The enzyme catalyses a monoacylglycerol + H2O = glycerol + a fatty acid + H(+). It catalyses the reaction a diacylglycerol + H2O = a monoacylglycerol + a fatty acid + H(+). Functionally, secreted lipase involved in Dandruff and seborrheic dermatitis (D/SD) probably via lipase-mediated breakdown of sebaceous lipids and release of irritating free fatty acids. Shows activity against monoglyceride and diglyceride substrates, but not triglyceride substrates and does not exhibit regio-selective production of diacylglycerols. Hydrolyzes both 1,2- and 1,3-diacylglycerols. Also hydrolyzes distearin, dilinolein and dipalmitolein. Cleaves oleic acid from 1,2 isomers of diolein on both the 1 and the 2 position of the glycerol backbone, resulting mainly in free fatty acids but no monoolein is detected. Shows activity on monoolein and liberates mostly free fatty acids, but can also perform the reverse reaction and produce diolein. This chain is Secreted mono- and diacylglycerol lipase MDL2, found in Malassezia globosa (strain ATCC MYA-4612 / CBS 7966) (Dandruff-associated fungus).